A 412-amino-acid polypeptide reads, in one-letter code: 3,4-dihydroxybenzoate--[aryl-carrier protein] ligase (412 aa).

This sequence belongs to the ATP-dependent AMP-binding enzyme family.

The enzyme catalyses holo-[aryl-carrier protein] + 3,4-dihydroxybenzoate + ATP = 3,4-dihydroxybenzoyl-[aryl-carrier protein] + AMP + diphosphate. It carries out the reaction 3,4-dihydroxybenzoate + ATP + H(+) = 3,4-dihydroxybenzoyl-5'-AMP + diphosphate. The catalysed reaction is 3,4-dihydroxybenzoyl-5'-AMP + holo-[aryl-carrier protein] = 3,4-dihydroxybenzoyl-[aryl-carrier protein] + AMP + H(+). Its pathway is siderophore biosynthesis; petrobactin biosynthesis. ATP-pyrophosphate exchange is inhibited in vitro by nonhydrolyzable acylsulfamate analogs that mimic the AsbC-bound intermediate 3,4-dihydroxybenzoyl-AMP. Its function is as follows. Involved in the biosynthesis of petrobactin, a catecholate siderophore that functions in both iron acquisition and virulence. Catalyzes the adenylation of 3,4-dihydroxybenzoate (3,4-DHBA) to the corresponding AMP ester, followed by the transfer of the activated unit to the phosphopantetheine thiol of the aryl-carrier protein AsbD. This chain is 3,4-dihydroxybenzoate--[aryl-carrier protein] ligase, found in Bacillus anthracis.